Consider the following 285-residue polypeptide: Ubiquinone biosynthesis protein COQ4, mitochondrial (285 aa).

A mitochondrion-targeting transit peptide spans 1-11 (MPPTVRQGIRT). Residues H166, D167, H170, and E182 each coordinate Zn(2+).

It belongs to the COQ4 family. In terms of assembly, component of a multi-subunit COQ enzyme complex, composed of at least COQ3, COQ4, COQ5, COQ6, COQ7 and COQ9. Zn(2+) serves as cofactor.

The protein resides in the mitochondrion inner membrane. It carries out the reaction a 4-hydroxy-3-methoxy-5-(all-trans-polyprenyl)benzoate + H(+) = a 2-methoxy-6-(all-trans-polyprenyl)phenol + CO2. The protein operates within cofactor biosynthesis; ubiquinone biosynthesis. Lyase that catalyzes the C1-decarboxylation of 4-hydroxy-3-methoxy-5-(all-trans-polyprenyl)benzoic acid into 2-methoxy-6-(all-trans-polyprenyl)phenol during ubiquinone biosynthesis. This Paracoccidioides brasiliensis (strain Pb18) protein is Ubiquinone biosynthesis protein COQ4, mitochondrial.